The chain runs to 242 residues: 1-(5-phosphoribosyl)-5-[(5-phosphoribosylamino)methylideneamino] imidazole-4-carboxamide isomerase (242 aa).

Aspartate 8 functions as the Proton acceptor in the catalytic mechanism. Aspartate 129 serves as the catalytic Proton donor.

This sequence belongs to the HisA/HisF family.

The protein resides in the cytoplasm. The catalysed reaction is 1-(5-phospho-beta-D-ribosyl)-5-[(5-phospho-beta-D-ribosylamino)methylideneamino]imidazole-4-carboxamide = 5-[(5-phospho-1-deoxy-D-ribulos-1-ylimino)methylamino]-1-(5-phospho-beta-D-ribosyl)imidazole-4-carboxamide. Its pathway is amino-acid biosynthesis; L-histidine biosynthesis; L-histidine from 5-phospho-alpha-D-ribose 1-diphosphate: step 4/9. The protein is 1-(5-phosphoribosyl)-5-[(5-phosphoribosylamino)methylideneamino] imidazole-4-carboxamide isomerase of Erythrobacter litoralis (strain HTCC2594).